The chain runs to 508 residues: Light-independent protochlorophyllide reductase subunit B (508 aa).

Residue D36 coordinates [4Fe-4S] cluster. Catalysis depends on D294, which acts as the Proton donor. G429–M430 lines the substrate pocket.

The protein belongs to the ChlB/BchB/BchZ family. As to quaternary structure, protochlorophyllide reductase is composed of three subunits; ChlL, ChlN and ChlB. Forms a heterotetramer of two ChlB and two ChlN subunits. [4Fe-4S] cluster serves as cofactor.

It carries out the reaction chlorophyllide a + oxidized 2[4Fe-4S]-[ferredoxin] + 2 ADP + 2 phosphate = protochlorophyllide a + reduced 2[4Fe-4S]-[ferredoxin] + 2 ATP + 2 H2O. The protein operates within porphyrin-containing compound metabolism; chlorophyll biosynthesis (light-independent). Its function is as follows. Component of the dark-operative protochlorophyllide reductase (DPOR) that uses Mg-ATP and reduced ferredoxin to reduce ring D of protochlorophyllide (Pchlide) to form chlorophyllide a (Chlide). This reaction is light-independent. The NB-protein (ChlN-ChlB) is the catalytic component of the complex. This is Light-independent protochlorophyllide reductase subunit B from Thermosynechococcus vestitus (strain NIES-2133 / IAM M-273 / BP-1).